A 217-amino-acid chain; its full sequence is Ribosomal large subunit pseudouridine synthase E (217 aa).

Residues 19–28 (HQVKRFSSQR) are compositionally biased toward polar residues. Positions 19–38 (HQVKRFSSQRSTRRKPENQP) are disordered. Asp-79 (nucleophile) is an active-site residue.

It belongs to the pseudouridine synthase RsuA family.

The enzyme catalyses uridine(2457) in 23S rRNA = pseudouridine(2457) in 23S rRNA. Its function is as follows. Responsible for synthesis of pseudouridine from uracil-2457 in 23S ribosomal RNA. This Escherichia coli O157:H7 protein is Ribosomal large subunit pseudouridine synthase E (rluE).